The primary structure comprises 595 residues: Estrogen receptor (595 aa).

A modulating (transactivation AF-1); mediates interaction with MACROD1 region spans residues 1–184 (MTMTLHTKAS…AMESAKETRY (184 aa)). A glycan (O-linked (GlcNAc) serine) is linked at Ser10. Residues 35–47 (LERPLGEVYVDGS) form a required for interaction with NCOA1 region. Residues 35–174 (LERPLGEVYV…LASTGDKGSM (140 aa)) form an interaction with DDX5; self-association region. Residues Ser104 and Ser106 each carry the phosphoserine; by CDK2 modification. At Ser118 the chain carries Phosphoserine. Residues 149–173 (FYRPTSDNRRQSGRERLASTGDKGS) form a disordered region. The span at 154–165 (SDNRRQSGRERL) shows a compositional bias: basic and acidic residues. At Ser167 the chain carries Phosphoserine; by CK2. 2 NR C4-type zinc fingers span residues 185–205 (CAVC…CEGC) and 221–245 (CPAT…LRKC). The segment at residues 185–250 (CAVCNDYASG…RLRKCYEVGM (66 aa)) is a DNA-binding region (nuclear receptor). A mediates interaction with DNTTIP2 region spans residues 185–310 (CAVCNDYASG…TKKNSPALSL (126 aa)). A hinge region spans residues 251–310 (MKGGIRKDRRGGRMLKHKRQRDEGEGRNEVGSSGDVRASNLWPSPLLIKHTKKNSPALSL). Positions 257 to 269 (KDRRGGRMLKHKR) are enriched in basic residues. The tract at residues 257 to 287 (KDRRGGRMLKHKRQRDEGEGRNEVGSSGDVR) is disordered. An Asymmetric dimethylarginine; by PRMT1 modification is found at Arg260. Positions 262-595 (GRMLKHKRQR…EEAGAFPTTV (334 aa)) are interaction with AKAP13. Residues 264–595 (MLKHKRQRDE…EEAGAFPTTV (332 aa)) form a self-association region. Residues 311–547 (TADQMVSALL…DLLLEMLDAH (237 aa)) enclose the NR LBD domain. A transactivation AF-2 region spans residues 311-595 (TADQMVSALL…EEAGAFPTTV (285 aa)). 2 residues coordinate 17beta-estradiol: Glu353 and Arg394. Residue Cys447 is the site of S-palmitoyl cysteine attachment. His524 lines the 17beta-estradiol pocket. Tyr537 bears the Phosphotyrosine; by Tyr-kinases mark. Thr571 is a glycosylation site (O-linked (GlcNAc) threonine).

The protein belongs to the nuclear hormone receptor family. NR3 subfamily. As to quaternary structure, binds DNA as a homodimer. Can form a heterodimer with ESR2. Interacts with coactivator NCOA5. Interacts with PELP1, the interaction is enhanced by 17-beta-estradiol; the interaction increases ESR1 transcriptional activity. Interacts with NCOA7; the interaction is ligand-inducible. Interacts with AKAP13, CUEDC2, HEXIM1, KDM5A, MAP1S, SMARD1, and UBE1C. Interacts with MUC1; the interaction is stimulated by 7 beta-estradiol (E2) and enhances ESR1-mediated transcription. Interacts with DNTTIP2, and UIMC1. Interacts with KMT2D/MLL2. Interacts with ATAD2; the interaction is enhanced by estradiol. Interacts with KIF18A and LDB1. Interacts with RLIM (via its C-terminus). Interacts with MACROD1. Interacts with SH2D4A and PLCG. Interacts with SH2D4A; the interaction blocks binding to PLCG and inhibits estrogen-induced cell proliferation. Interacts with DYNLL1. Interacts with CCDC62; the interaction requires estradiol and appears to enhance the transcription of target genes. Interacts with NR2C1; the interaction prevents homodimerization of ESR1 and suppresses its transcriptional activity and cell growth. Interacts with DNAAF4. Interacts with PRMT2. Interacts with RBFOX2. Interacts with EP300; the interaction is estrogen-dependent and enhanced by CITED1. Interacts with CITED1; the interaction is estrogen-dependent. Interacts with FAM120B, FOXL2, PHB2 and SLC30A9. Interacts with coactivators NCOA3 and NCOA6. Interacts with STK3/MST2 only in the presence of SAV1 and vice-versa. Binds to CSNK1D. Interacts with NCOA2; NCOA2 can interact with ESR1 AF-1 and AF-2 domains simultaneously and mediate their transcriptional synergy. Interacts with DDX5. Interacts with NCOA1; the interaction seems to require a self-association of N-terminal and C-terminal regions. Interacts with ZNF366, DDX17, NFKB1, RELA, SP1 and SP3. Interacts with NRIP1. Interacts with GPER1; the interaction occurs in an estrogen-dependent manner. Interacts with CLOCK and the interaction is stimulated by estrogen. Interacts with TRIP4 (ufmylated); estrogen dependent. Interacts with LMTK3; the interaction phosphorylates ESR1 (in vitro) and protects it against proteasomal degradation. Interacts with CCAR2 (via N-terminus) in a ligand-independent manner. Interacts with ZFHX3. Interacts with SFR1 in a ligand-dependent and -independent manner. Interacts with DCAF13, LATS1 and DCAF1; regulates ESR1 ubiquitination and ubiquitin-mediated proteasomal degradation. Interacts (via DNA-binding domain) with POU4F2 (C-terminus); this interaction increases the estrogen receptor ESR1 transcriptional activity in a DNA- and ligand 17-beta-estradiol-independent manner. Interacts with ESRRB isoform 1. Interacts with UBE3A and WBP2. Interacts with GTF2B. Interacts with RBM39. In the absence of hormonal ligand, interacts with TACC1. Interacts with PI3KR1 or PI3KR2 and PTK2/FAK1. Interacts with SRC. Interacts with BAG1; the interaction is promoted in the absence of estradiol (17-beta-estradiol/E2). Interacts with and ubiquitinated by STUB1; the interaction is promoted in the absence of estradiol (17-beta-estradiol/E2). Interacts with NEDD8. Post-translationally, ubiquitinated; regulated by LATS1 via DCAF1 it leads to ESR1 proteasomal degradation. Deubiquitinated by OTUB1. Ubiquitinated by STUB1/CHIP; in the CA1 hippocampal region following loss of endogenous circulating estradiol (17-beta-estradiol/E2). Ubiquitinated by UBR5, leading to its degradation: UBR5 specifically recognizes and binds ligand-bound ESR1 when it is not associated with coactivators (NCOAs). In presence of NCOAs, the UBR5-degron is not accessible, preventing its ubiquitination and degradation. In terms of processing, phosphorylated by cyclin A/CDK2 and CK1. Phosphorylation probably enhances transcriptional activity. Dephosphorylation at Ser-118 by PPP5C inhibits its transactivation activity. Phosphorylated by LMTK3 (in vitro). Palmitoylated at Cys-447 by ZDHHC7 and ZDHHC21. Palmitoylation is required for plasma membrane targeting and for rapid intracellular signaling via ERK and AKT kinases and cAMP generation, but not for signaling mediated by the nuclear hormone receptor. Post-translationally, dimethylated by PRMT1 at Arg-260. The methylation may favor cytoplasmic localization. Demethylated by JMJD6 at Arg-260.

Its subcellular location is the nucleus. It localises to the cytoplasm. It is found in the golgi apparatus. The protein resides in the cell membrane. Functionally, nuclear hormone receptor. The steroid hormones and their receptors are involved in the regulation of eukaryotic gene expression and affect cellular proliferation and differentiation in target tissues. Ligand-dependent nuclear transactivation involves either direct homodimer binding to a palindromic estrogen response element (ERE) sequence or association with other DNA-binding transcription factors, such as AP-1/c-Jun, c-Fos, ATF-2, Sp1 and Sp3, to mediate ERE-independent signaling. Ligand binding induces a conformational change allowing subsequent or combinatorial association with multiprotein coactivator complexes through LXXLL motifs of their respective components. Mutual transrepression occurs between the estrogen receptor (ER) and NF-kappa-B in a cell-type specific manner. Decreases NF-kappa-B DNA-binding activity and inhibits NF-kappa-B-mediated transcription from the IL6 promoter and displace RELA/p65 and associated coregulators from the promoter. Recruited to the NF-kappa-B response element of the CCL2 and IL8 promoters and can displace CREBBP. Present with NF-kappa-B components RELA/p65 and NFKB1/p50 on ERE sequences. Can also act synergistically with NF-kappa-B to activate transcription involving respective recruitment adjacent response elements; the function involves CREBBP. Can activate the transcriptional activity of TFF1. Also mediates membrane-initiated estrogen signaling involving various kinase cascades. Essential for MTA1-mediated transcriptional regulation of BRCA1 and BCAS3. Maintains neuronal survival in response to ischemic reperfusion injury when in the presence of circulating estradiol (17-beta-estradiol/E2). This is Estrogen receptor (ESR1) from Felis catus (Cat).